We begin with the raw amino-acid sequence, 103 residues long: Small ribosomal subunit protein uS10 (103 aa).

This sequence belongs to the universal ribosomal protein uS10 family. In terms of assembly, part of the 30S ribosomal subunit.

Involved in the binding of tRNA to the ribosomes. This Acinetobacter baylyi (strain ATCC 33305 / BD413 / ADP1) protein is Small ribosomal subunit protein uS10.